The chain runs to 711 residues: DNA ligase (711 aa).

The segment at 1-29 (MSEDAIGQQVPAAQEAAAGAEPNSAARER) is disordered. Over residues 12-25 (AAQEAAAGAEPNSA) the composition is skewed to low complexity. NAD(+)-binding positions include 54-58 (DAAFD), 103-104 (SL), and E133. K135 functions as the N6-AMP-lysine intermediate in the catalytic mechanism. Positions 156, 197, 313, and 337 each coordinate NAD(+). The Zn(2+) site is built by C431, C434, C450, and C456. In terms of domain architecture, BRCT spans 620–709 (QGPRPLEGVT…PEAARAVARV (90 aa)).

It belongs to the NAD-dependent DNA ligase family. LigA subfamily. The cofactor is Mg(2+). Mn(2+) is required as a cofactor.

The enzyme catalyses NAD(+) + (deoxyribonucleotide)n-3'-hydroxyl + 5'-phospho-(deoxyribonucleotide)m = (deoxyribonucleotide)n+m + AMP + beta-nicotinamide D-nucleotide.. In terms of biological role, DNA ligase that catalyzes the formation of phosphodiester linkages between 5'-phosphoryl and 3'-hydroxyl groups in double-stranded DNA using NAD as a coenzyme and as the energy source for the reaction. It is essential for DNA replication and repair of damaged DNA. In Salinispora tropica (strain ATCC BAA-916 / DSM 44818 / JCM 13857 / NBRC 105044 / CNB-440), this protein is DNA ligase.